We begin with the raw amino-acid sequence, 452 residues long: UDP-N-acetylmuramoylalanine--D-glutamate ligase (452 aa).

115 to 121 (GTNGKTT) contributes to the ATP binding site.

This sequence belongs to the MurCDEF family.

Its subcellular location is the cytoplasm. It carries out the reaction UDP-N-acetyl-alpha-D-muramoyl-L-alanine + D-glutamate + ATP = UDP-N-acetyl-alpha-D-muramoyl-L-alanyl-D-glutamate + ADP + phosphate + H(+). The protein operates within cell wall biogenesis; peptidoglycan biosynthesis. In terms of biological role, cell wall formation. Catalyzes the addition of glutamate to the nucleotide precursor UDP-N-acetylmuramoyl-L-alanine (UMA). The chain is UDP-N-acetylmuramoylalanine--D-glutamate ligase from Citrifermentans bemidjiense (strain ATCC BAA-1014 / DSM 16622 / JCM 12645 / Bem) (Geobacter bemidjiensis).